The primary structure comprises 252 residues: TLC domain-containing protein 1 (252 aa).

A signal peptide spans methionine 1 to alanine 29. At leucine 30–arginine 47 the chain is on the extracellular side. Residues glycine 41 to leucine 235 form the TLC domain. The helical transmembrane segment at asparagine 48–tryptophan 68 threads the bilayer. Residues glutamine 69–serine 84 lie on the Cytoplasmic side of the membrane. The chain crosses the membrane as a helical span at residues glycine 85–phenylalanine 105. The Extracellular portion of the chain corresponds to asparagine 106–serine 124. Residues alanine 125–valine 145 constitute an intramembrane region (helical). The Extracellular segment spans residues glutamate 146–tyrosine 174. A helical membrane pass occupies residues valine 175–phenylalanine 195. Over valine 196–glutamine 202 the chain is Cytoplasmic. A helical transmembrane segment spans residues glycine 203 to phenylalanine 223. The Extracellular segment spans residues serine 224–aspartate 252.

As to quaternary structure, interacts with CACNA1C in vitro; however the relevance of the interaction in vivo is unclear.

Its subcellular location is the cell membrane. Its function is as follows. Regulates the composition and fluidity of the plasma membrane. Inhibits the incorporation of membrane-fluidizing phospholipids containing omega-3 long-chain polyunsaturated fatty acids (LCPUFA) and thereby promotes membrane rigidity. Does not appear to have any effect on LCPUFA synthesis. The protein is TLC domain-containing protein 1 (TLCD1) of Gallus gallus (Chicken).